We begin with the raw amino-acid sequence, 95 residues long: Sec-independent protein translocase protein TatA (95 aa).

A helical transmembrane segment spans residues 1–21; it reads MGSMSVWHWVIVAVVVMLLFG. The segment at 42–95 is disordered; the sequence is GMADDETQPNTATSVPPVGPNDPVRTLPHQGAPGTAPQPPHVQPHVPAGDHKAV.

The protein belongs to the TatA/E family. As to quaternary structure, the Tat system comprises two distinct complexes: a TatABC complex, containing multiple copies of TatA, TatB and TatC subunits, and a separate TatA complex, containing only TatA subunits. Substrates initially bind to the TatABC complex, which probably triggers association of the separate TatA complex to form the active translocon.

The protein resides in the cell inner membrane. Its function is as follows. Part of the twin-arginine translocation (Tat) system that transports large folded proteins containing a characteristic twin-arginine motif in their signal peptide across membranes. TatA could form the protein-conducting channel of the Tat system. In Methylorubrum extorquens (strain PA1) (Methylobacterium extorquens), this protein is Sec-independent protein translocase protein TatA.